The primary structure comprises 235 residues: Octanoyltransferase (235 aa).

The BPL/LPL catalytic domain occupies glycine 28–leucine 203. Residues arginine 66 to histidine 73, serine 133 to glycine 135, and glycine 146 to alanine 148 each bind substrate. Cysteine 164 functions as the Acyl-thioester intermediate in the catalytic mechanism. The disordered stretch occupies residues alanine 202 to valine 235.

This sequence belongs to the LipB family.

The protein localises to the cytoplasm. The enzyme catalyses octanoyl-[ACP] + L-lysyl-[protein] = N(6)-octanoyl-L-lysyl-[protein] + holo-[ACP] + H(+). It participates in protein modification; protein lipoylation via endogenous pathway; protein N(6)-(lipoyl)lysine from octanoyl-[acyl-carrier-protein]: step 1/2. Catalyzes the transfer of endogenously produced octanoic acid from octanoyl-acyl-carrier-protein onto the lipoyl domains of lipoate-dependent enzymes. Lipoyl-ACP can also act as a substrate although octanoyl-ACP is likely to be the physiological substrate. The sequence is that of Octanoyltransferase from Geobacter sulfurreducens (strain ATCC 51573 / DSM 12127 / PCA).